An 86-amino-acid chain; its full sequence is Large ribosomal subunit protein bL31 (86 aa).

A disordered region spans residues 65-86; the sequence is YGMGSANSATSKEQKEEKDSNK. Residues 76–86 show a composition bias toward basic and acidic residues; sequence KEQKEEKDSNK.

Belongs to the bacterial ribosomal protein bL31 family. Type A subfamily. Part of the 50S ribosomal subunit.

Functionally, binds the 23S rRNA. The chain is Large ribosomal subunit protein bL31 from Prochlorococcus marinus (strain MIT 9312).